Here is a 313-residue protein sequence, read N- to C-terminus: Porphobilinogen deaminase (313 aa).

At Cys242 the chain carries S-(dipyrrolylmethanemethyl)cysteine.

The protein belongs to the HMBS family. In terms of assembly, monomer. It depends on dipyrromethane as a cofactor.

It carries out the reaction 4 porphobilinogen + H2O = hydroxymethylbilane + 4 NH4(+). The protein operates within porphyrin-containing compound metabolism; protoporphyrin-IX biosynthesis; coproporphyrinogen-III from 5-aminolevulinate: step 2/4. Functionally, tetrapolymerization of the monopyrrole PBG into the hydroxymethylbilane pre-uroporphyrinogen in several discrete steps. The protein is Porphobilinogen deaminase of Escherichia coli O17:K52:H18 (strain UMN026 / ExPEC).